Reading from the N-terminus, the 759-residue chain is Arylphorin subunit A4 (759 aa).

Residues 1–16 (MKIAIVLLAIIALVAA) form the signal peptide.

This sequence belongs to the hemocyanin family. As to quaternary structure, heterohexamer. Fat body.

Its subcellular location is the secreted. The protein localises to the extracellular space. Arylphorin is a larval storage protein (LSP) which may serve as a storage protein used primarily as a source of aromatic amino acids for protein synthesis during metamorphosis. It is a constituent of the sclerotizing system of the cuticle, and serves as a carrier for ecdysteroid hormone. In Calliphora vicina (Blue blowfly), this protein is Arylphorin subunit A4.